Reading from the N-terminus, the 122-residue chain is Large ribosomal subunit protein uL14c (122 aa).

The protein belongs to the universal ribosomal protein uL14 family. As to quaternary structure, part of the 50S ribosomal subunit.

Its subcellular location is the plastid. The protein resides in the chloroplast. Binds to 23S rRNA. This chain is Large ribosomal subunit protein uL14c, found in Amborella trichopoda.